The chain runs to 467 residues: 3-isopropylmalate dehydratase large subunit (467 aa).

Residues Cys-347, Cys-407, and Cys-410 each contribute to the [4Fe-4S] cluster site.

This sequence belongs to the aconitase/IPM isomerase family. LeuC type 1 subfamily. Heterodimer of LeuC and LeuD. The cofactor is [4Fe-4S] cluster.

It carries out the reaction (2R,3S)-3-isopropylmalate = (2S)-2-isopropylmalate. The protein operates within amino-acid biosynthesis; L-leucine biosynthesis; L-leucine from 3-methyl-2-oxobutanoate: step 2/4. Catalyzes the isomerization between 2-isopropylmalate and 3-isopropylmalate, via the formation of 2-isopropylmaleate. This chain is 3-isopropylmalate dehydratase large subunit, found in Synechococcus sp. (strain JA-3-3Ab) (Cyanobacteria bacterium Yellowstone A-Prime).